Consider the following 570-residue polypeptide: Sulfite reductase [NADPH] hemoprotein beta-component (570 aa).

The [4Fe-4S] cluster site is built by cysteine 434, cysteine 440, cysteine 479, and cysteine 483. Cysteine 483 is a siroheme binding site.

It belongs to the nitrite and sulfite reductase 4Fe-4S domain family. As to quaternary structure, alpha(8)-beta(8). The alpha component is a flavoprotein, the beta component is a hemoprotein. The cofactor is siroheme. It depends on [4Fe-4S] cluster as a cofactor.

It carries out the reaction hydrogen sulfide + 3 NADP(+) + 3 H2O = sulfite + 3 NADPH + 4 H(+). Its pathway is sulfur metabolism; hydrogen sulfide biosynthesis; hydrogen sulfide from sulfite (NADPH route): step 1/1. Component of the sulfite reductase complex that catalyzes the 6-electron reduction of sulfite to sulfide. This is one of several activities required for the biosynthesis of L-cysteine from sulfate. This is Sulfite reductase [NADPH] hemoprotein beta-component from Escherichia fergusonii (strain ATCC 35469 / DSM 13698 / CCUG 18766 / IAM 14443 / JCM 21226 / LMG 7866 / NBRC 102419 / NCTC 12128 / CDC 0568-73).